The chain runs to 330 residues: ADP-L-glycero-D-manno-heptose-6-epimerase (330 aa).

NADP(+) is bound by residues 11–12, 32–33, K39, K54, 75–79, and N92; these read FI, DN, and EGACS. The active-site Proton acceptor is the Y139. K143 contacts NADP(+). A substrate-binding site is contributed by N168. Residues V169 and K177 each contribute to the NADP(+) site. K177 acts as the Proton acceptor in catalysis. Residues R179, H186, 200 to 203, R213, and Y292 each bind substrate; that span reads FGEY.

The protein belongs to the NAD(P)-dependent epimerase/dehydratase family. HldD subfamily. Homopentamer. It depends on NADP(+) as a cofactor.

The enzyme catalyses ADP-D-glycero-beta-D-manno-heptose = ADP-L-glycero-beta-D-manno-heptose. Its pathway is nucleotide-sugar biosynthesis; ADP-L-glycero-beta-D-manno-heptose biosynthesis; ADP-L-glycero-beta-D-manno-heptose from D-glycero-beta-D-manno-heptose 7-phosphate: step 4/4. Its function is as follows. Catalyzes the interconversion between ADP-D-glycero-beta-D-manno-heptose and ADP-L-glycero-beta-D-manno-heptose via an epimerization at carbon 6 of the heptose. The protein is ADP-L-glycero-D-manno-heptose-6-epimerase of Burkholderia thailandensis (strain ATCC 700388 / DSM 13276 / CCUG 48851 / CIP 106301 / E264).